The sequence spans 193 residues: ATP-dependent Clp protease proteolytic subunit (193 aa).

The Nucleophile role is filled by S98. The active site involves H123.

This sequence belongs to the peptidase S14 family. As to quaternary structure, fourteen ClpP subunits assemble into 2 heptameric rings which stack back to back to give a disk-like structure with a central cavity, resembling the structure of eukaryotic proteasomes.

Its subcellular location is the cytoplasm. It catalyses the reaction Hydrolysis of proteins to small peptides in the presence of ATP and magnesium. alpha-casein is the usual test substrate. In the absence of ATP, only oligopeptides shorter than five residues are hydrolyzed (such as succinyl-Leu-Tyr-|-NHMec, and Leu-Tyr-Leu-|-Tyr-Trp, in which cleavage of the -Tyr-|-Leu- and -Tyr-|-Trp bonds also occurs).. In terms of biological role, cleaves peptides in various proteins in a process that requires ATP hydrolysis. Has a chymotrypsin-like activity. Plays a major role in the degradation of misfolded proteins. This Mannheimia succiniciproducens (strain KCTC 0769BP / MBEL55E) protein is ATP-dependent Clp protease proteolytic subunit.